A 212-amino-acid chain; its full sequence is 3-isopropylmalate dehydratase small subunit (212 aa).

It belongs to the LeuD family. LeuD type 1 subfamily. As to quaternary structure, heterodimer of LeuC and LeuD.

The enzyme catalyses (2R,3S)-3-isopropylmalate = (2S)-2-isopropylmalate. It participates in amino-acid biosynthesis; L-leucine biosynthesis; L-leucine from 3-methyl-2-oxobutanoate: step 2/4. Its function is as follows. Catalyzes the isomerization between 2-isopropylmalate and 3-isopropylmalate, via the formation of 2-isopropylmaleate. In Methylococcus capsulatus (strain ATCC 33009 / NCIMB 11132 / Bath), this protein is 3-isopropylmalate dehydratase small subunit.